Reading from the N-terminus, the 54-residue chain is uncharacterized protein (54 aa).

Residues 32 to 52 (LFSLLVLIILCFIDPILFYFI) form a helical membrane-spanning segment.

Its subcellular location is the host membrane. This is an uncharacterized protein from Cassava vein mosaic virus (CsVMV).